Consider the following 956-residue polypeptide: Valine--tRNA ligase (956 aa).

Positions 43-53 (PNITGNLHIGH) match the 'HIGH' region motif. Residues 556 to 560 (KMSKS) carry the 'KMSKS' region motif. Lys559 contributes to the ATP binding site. A coiled-coil region spans residues 889 to 920 (PKEKELKNLNKEISKIQLAINKLQQRLSNEEF).

Belongs to the class-I aminoacyl-tRNA synthetase family. ValS type 1 subfamily. In terms of assembly, monomer.

The protein localises to the cytoplasm. It carries out the reaction tRNA(Val) + L-valine + ATP = L-valyl-tRNA(Val) + AMP + diphosphate. Its function is as follows. Catalyzes the attachment of valine to tRNA(Val). As ValRS can inadvertently accommodate and process structurally similar amino acids such as threonine, to avoid such errors, it has a 'posttransfer' editing activity that hydrolyzes mischarged Thr-tRNA(Val) in a tRNA-dependent manner. The sequence is that of Valine--tRNA ligase from Buchnera aphidicola subsp. Baizongia pistaciae (strain Bp).